The chain runs to 284 residues: Protease HtpX homolog (284 aa).

Helical transmembrane passes span T7–H26 and I33–S47. H129 contacts Zn(2+). E130 is an active-site residue. H133 contacts Zn(2+). 2 helical membrane passes run L148 to V168 and I180 to I200. Residue E205 coordinates Zn(2+).

It belongs to the peptidase M48B family. The cofactor is Zn(2+).

It is found in the cell membrane. The sequence is that of Protease HtpX homolog from Methanocaldococcus jannaschii (strain ATCC 43067 / DSM 2661 / JAL-1 / JCM 10045 / NBRC 100440) (Methanococcus jannaschii).